A 152-amino-acid chain; its full sequence is Deoxyuridine 5'-triphosphate nucleotidohydrolase (152 aa).

Substrate-binding positions include 72-74, N85, and 89-91; these read RSG and TID.

It belongs to the dUTPase family. The cofactor is Mg(2+).

The catalysed reaction is dUTP + H2O = dUMP + diphosphate + H(+). Its pathway is pyrimidine metabolism; dUMP biosynthesis; dUMP from dCTP (dUTP route): step 2/2. In terms of biological role, this enzyme is involved in nucleotide metabolism: it produces dUMP, the immediate precursor of thymidine nucleotides and it decreases the intracellular concentration of dUTP so that uracil cannot be incorporated into DNA. In Rhodopseudomonas palustris (strain BisB5), this protein is Deoxyuridine 5'-triphosphate nucleotidohydrolase.